Reading from the N-terminus, the 155-residue chain is Large ribosomal subunit protein uL30 (155 aa).

Belongs to the universal ribosomal protein uL30 family. As to quaternary structure, part of the 50S ribosomal subunit.

In Pyrococcus horikoshii (strain ATCC 700860 / DSM 12428 / JCM 9974 / NBRC 100139 / OT-3), this protein is Large ribosomal subunit protein uL30.